Here is a 539-residue protein sequence, read N- to C-terminus: Glucose-6-phosphate isomerase (539 aa).

The active-site Proton donor is glutamate 353. Catalysis depends on residues histidine 384 and lysine 505.

This sequence belongs to the GPI family.

It localises to the cytoplasm. The enzyme catalyses alpha-D-glucose 6-phosphate = beta-D-fructose 6-phosphate. The protein operates within carbohydrate biosynthesis; gluconeogenesis. It participates in carbohydrate degradation; glycolysis; D-glyceraldehyde 3-phosphate and glycerone phosphate from D-glucose: step 2/4. In terms of biological role, catalyzes the reversible isomerization of glucose-6-phosphate to fructose-6-phosphate. This is Glucose-6-phosphate isomerase from Ralstonia nicotianae (strain ATCC BAA-1114 / GMI1000) (Ralstonia solanacearum).